The chain runs to 128 residues: Arginine decarboxylase proenzyme (128 aa).

Ser76 functions as the Schiff-base intermediate with substrate; via pyruvic acid in the catalytic mechanism. Ser76 bears the Pyruvic acid (Ser); by autocatalysis mark. Residue His81 is the Proton acceptor; for processing activity of the active site. The active-site Proton donor; for catalytic activity is Cys96.

Belongs to the prokaryotic AdoMetDC family. Type 1 subfamily. In terms of assembly, heterooctamer of four alpha and four beta chains arranged as a tetramer of alpha/beta heterodimers. Pyruvate serves as cofactor. In terms of processing, is synthesized initially as an inactive proenzyme. Formation of the active enzyme involves a self-maturation process in which the active site pyruvoyl group is generated from an internal serine residue via an autocatalytic post-translational modification. Two non-identical subunits are generated from the proenzyme in this reaction, and the pyruvate is formed at the N-terminus of the alpha chain, which is derived from the carboxyl end of the proenzyme. The post-translation cleavage follows an unusual pathway, termed non-hydrolytic serinolysis, in which the side chain hydroxyl group of the serine supplies its oxygen atom to form the C-terminus of the beta chain, while the remainder of the serine residue undergoes an oxidative deamination to produce ammonia and the pyruvoyl group blocking the N-terminus of the alpha chain.

It carries out the reaction L-arginine + H(+) = agmatine + CO2. The protein operates within amine and polyamine biosynthesis; agmatine biosynthesis; agmatine from L-arginine: step 1/1. In terms of biological role, specifically catalyzes the decarboxylation of L-arginine to agmatine. Has no S-adenosylmethionine decarboxylase (AdoMetDC) activity. This is Arginine decarboxylase proenzyme from Sulfurisphaera tokodaii (strain DSM 16993 / JCM 10545 / NBRC 100140 / 7) (Sulfolobus tokodaii).